The chain runs to 333 residues: Glyceraldehyde-3-phosphate dehydrogenase (333 aa).

Residues 11 to 12, Asp32, and Arg77 each bind NAD(+); that span reads RI. Residues 148–150, Thr179, 208–209, and Arg231 each bind D-glyceraldehyde 3-phosphate; these read SCT and TG. The Nucleophile role is filled by Cys149. NAD(+) is bound at residue Asn313.

This sequence belongs to the glyceraldehyde-3-phosphate dehydrogenase family. As to quaternary structure, homotetramer.

It is found in the cytoplasm. The enzyme catalyses D-glyceraldehyde 3-phosphate + phosphate + NAD(+) = (2R)-3-phospho-glyceroyl phosphate + NADH + H(+). The protein operates within carbohydrate degradation; glycolysis; pyruvate from D-glyceraldehyde 3-phosphate: step 1/5. The sequence is that of Glyceraldehyde-3-phosphate dehydrogenase (Gapdh) from Glossina morsitans morsitans (Savannah tsetse fly).